The primary structure comprises 349 residues: Prostaglandin reductase 1 (349 aa).

Position 18 is a phosphothreonine (T18). Residue S20 is modified to Phosphoserine. NADP(+)-binding positions include G152 to G155, K178, Y193, N217, C239 to Y245, F270 to F272, and N321. N6-(2-hydroxyisobutyryl)lysine; alternate is present on K178. K178 carries the post-translational modification N6-acetyllysine; alternate.

This sequence belongs to the NADP-dependent oxidoreductase L4BD family. As to quaternary structure, monomer or homodimer.

It is found in the cytoplasm. The enzyme catalyses 13,14-dihydro-15-oxo-prostaglandin E1 + NADP(+) = 15-oxoprostaglandin E1 + NADPH + H(+). It catalyses the reaction 13,14-dihydro-15-oxo-prostaglandin E2 + NADP(+) = 15-oxoprostaglandin E2 + NADPH + H(+). It carries out the reaction 13,14-dihydro-15-oxo-prostaglandin F1alpha + NADP(+) = 15-oxoprostaglandin F1alpha + NADPH + H(+). The catalysed reaction is 13,14-dihydro-15-oxo-PGF2alpha + NADP(+) = 15-oxoprostaglandin F2alpha + NADPH + H(+). The enzyme catalyses leukotriene B4 + NADP(+) = 12-oxo-leukotriene B4 + NADPH + H(+). It catalyses the reaction 20-hydroxy-leukotriene B4 + NADP(+) = 12-oxo-20-hydroxy-leukotriene B4 + NADPH + H(+). It carries out the reaction 6-trans-leukotriene B4 + NADP(+) = 12-oxo-(5S)-hydroxy-(6E,8E,10E,14Z)-eicosatetraenoate + NADPH + H(+). The catalysed reaction is (5S,12S)-dihydroxy-(6E,10E,12E,14Z)-eicosatetraenoate + NADP(+) = 12-oxo-(5S)-hydroxy-(6E,8E,10E,14Z)-eicosatetraenoate + NADPH + H(+). The enzyme catalyses an n-alkanal + NADP(+) = an alk-2-enal + NADPH + H(+). It catalyses the reaction hexanal + NADP(+) = (E)-hex-2-enal + NADPH + H(+). It carries out the reaction octanal + NADP(+) = (2E)-octenal + NADPH + H(+). The catalysed reaction is decanal + NADP(+) = (2E)-decenal + NADPH + H(+). The enzyme catalyses dodecanal + NADP(+) = (2E)-dodecenal + NADPH + H(+). It catalyses the reaction 4-hydroxynonanal + NADP(+) = (E)-4-hydroxynon-2-enal + NADPH + H(+). It carries out the reaction pentan-2-one + NADP(+) = (E)-pent-3-en-2-one + NADPH + H(+). The catalysed reaction is nonan-2-one + NADP(+) = (3E)-nonen-2-one + NADPH + H(+). Its function is as follows. NAD(P)H-dependent oxidoreductase involved in metabolic inactivation of pro- and anti-inflammatory eicosanoids: prostaglandins (PG), leukotrienes (LT) and lipoxins (LX). Catalyzes with high efficiency the reduction of the 13,14 double bond of 15-oxoPGs, including 15-oxo-PGE1, 15-oxo-PGE2, 15-oxo-PGF1-alpha and 15-oxo-PGF2-alpha. Catalyzes with lower efficiency the oxidation of the hydroxyl group at C12 of LTB4 and its derivatives, converting them into biologically less active 12-oxo-LTB4 metabolites. Reduces 15-oxo-LXA4 to 13,14 dihydro-15-oxo-LXA4, enhancing neutrophil recruitment at the inflammatory site. Plays a role in metabolic detoxification of alkenals and ketones. Reduces alpha,beta-unsaturated alkenals and ketones, particularly those with medium-chain length, showing highest affinity toward (2E)-decenal and (3E)-3-nonen-2-one. May inactivate 4-hydroxy-2-nonenal, a cytotoxic lipid constituent of oxidized low-density lipoprotein particles. This Oryctolagus cuniculus (Rabbit) protein is Prostaglandin reductase 1 (PTGR1).